Reading from the N-terminus, the 227-residue chain is DNA repair protein RecO (227 aa).

This sequence belongs to the RecO family.

Functionally, involved in DNA repair and RecF pathway recombination. This chain is DNA repair protein RecO, found in Pseudomonas entomophila (strain L48).